Here is a 442-residue protein sequence, read N- to C-terminus: UBX domain-containing protein 6 (442 aa).

The segment at 1-10 is mediates interaction with LMAN1; that stretch reads MKKFFQEIKA. The interval 13–111 is disordered; sequence KFKSAGPGQK…TNSVPEPKEE (99 aa). A Phosphoserine modification is found at Ser36. Residues 51–63 are VCP/p97-interacting motif (VIM); it reads EAQMAAAAALARL. Low complexity predominate over residues 52-61; the sequence is AQMAAAAALA. Residues 90–105 show a composition bias toward polar residues; that stretch reads EATSSNNPGAPGTNSV. The PUB domain maps to 175 to 244; sequence VDTIAKYLDN…GQEEFYVLGE (70 aa). Residues 332 to 408 enclose the UBX domain; sequence RKYTYALVRV…GLVPSALLTF (77 aa).

In terms of assembly, interacts with VCP through the PUB domain (via C-terminus) and VIM motif (via N-terminus); the interaction is direct. Forms a ternary complex with CAV1 and VCP. Interacts with SYVN1. Interacts with HERPUD1. Interacts with VCPKMT. May interact with DERL1. Interacts with PLAA, VCP and YOD1; may form a complex involved in macroautophagy. Interacts with LMAN1. In terms of tissue distribution, widely expressed (at protein level). Highest expression in brain (at protein level).

It is found in the cytoplasm. The protein localises to the cytosol. It localises to the membrane. Its subcellular location is the nucleus. The protein resides in the cytoskeleton. It is found in the microtubule organizing center. The protein localises to the centrosome. It localises to the early endosome membrane. Its subcellular location is the late endosome membrane. The protein resides in the lysosome membrane. Its function is as follows. May negatively regulate the ATPase activity of VCP, an ATP-driven segregase that associates with different cofactors to control a wide variety of cellular processes. As a cofactor of VCP, it may play a role in the transport of CAV1 to lysosomes for degradation. It may also play a role in endoplasmic reticulum-associated degradation (ERAD) of misfolded proteins. Together with VCP and other cofactors, it may play a role in macroautophagy, regulating for instance the clearance of damaged lysosomes. This is UBX domain-containing protein 6 from Mus musculus (Mouse).